Here is a 126-residue protein sequence, read N- to C-terminus: UPF0292 protein TSIB_0423 (126 aa).

Residues 20–100 enclose the Toprim domain; that stretch reads NGVILVEGMR…RVDTNTRREL (81 aa). Mg(2+) is bound by residues Glu-26, Asp-69, and Asp-71.

This sequence belongs to the UPF0292 family. Mg(2+) is required as a cofactor.

This Thermococcus sibiricus (strain DSM 12597 / MM 739) protein is UPF0292 protein TSIB_0423.